Consider the following 217-residue polypeptide: uncharacterized protein (217 aa).

The helical transmembrane segment at 26–48 threads the bilayer; sequence VFMRGYVVGLVLALMLVTAPAMA.

Its subcellular location is the membrane. This is an uncharacterized protein from Archaeoglobus fulgidus (strain ATCC 49558 / DSM 4304 / JCM 9628 / NBRC 100126 / VC-16).